Consider the following 325-residue polypeptide: Chain length determinant protein (325 aa).

Over 1–31 (MRVENNNVSGQNLDPEQIDLIDLLVQLWRGK) the chain is Cytoplasmic. A helical membrane pass occupies residues 32–52 (MTIIISVIVAIVLAIGYLVVA). At 53–294 (KEKWTSTAIV…LPIRRDSPKK (242 aa)) the chain is on the periplasmic side. The chain crosses the membrane as a helical span at residues 295-315 (AITLILAVLLGGMVGAGIVLG). Over 316–325 (RNALRNYNAK) the chain is Cytoplasmic.

It belongs to the WzzB/Cld/Rol family.

The protein resides in the cell inner membrane. Its pathway is bacterial outer membrane biogenesis; lipopolysaccharide biosynthesis. Functionally, confers a modal distribution of chain length on the O-antigen component of lipopolysaccharide (LPS). Gives rise to a reduced number of short chain molecules and increases in numbers of longer molecules, with a modal value of 13 (in strain O111/M92) and of 17 (in strain K12). The sequence is that of Chain length determinant protein (wzzB) from Escherichia coli.